The primary structure comprises 378 residues: Succinyl-diaminopimelate desuccinylase (378 aa).

H68 provides a ligand contact to Zn(2+). D70 is a catalytic residue. Residue D101 participates in Zn(2+) binding. E135 acts as the Proton acceptor in catalysis. Residues E136, E164, and H350 each contribute to the Zn(2+) site.

Belongs to the peptidase M20A family. DapE subfamily. As to quaternary structure, homodimer. Zn(2+) is required as a cofactor. It depends on Co(2+) as a cofactor.

The catalysed reaction is N-succinyl-(2S,6S)-2,6-diaminopimelate + H2O = (2S,6S)-2,6-diaminopimelate + succinate. The protein operates within amino-acid biosynthesis; L-lysine biosynthesis via DAP pathway; LL-2,6-diaminopimelate from (S)-tetrahydrodipicolinate (succinylase route): step 3/3. Catalyzes the hydrolysis of N-succinyl-L,L-diaminopimelic acid (SDAP), forming succinate and LL-2,6-diaminopimelate (DAP), an intermediate involved in the bacterial biosynthesis of lysine and meso-diaminopimelic acid, an essential component of bacterial cell walls. This Vibrio atlanticus (strain LGP32) (Vibrio splendidus (strain Mel32)) protein is Succinyl-diaminopimelate desuccinylase.